Consider the following 146-residue polypeptide: Large ribosomal subunit protein uL15 (146 aa).

The segment covering 1–13 (MKLHELKPSEGSR) has biased composition (basic and acidic residues). The disordered stretch occupies residues 1 to 54 (MKLHELKPSEGSRKVRNRVGRGIGSGNGKTAGKGHKGQNARSGGGVRPGFEGGQ). Composition is skewed to gly residues over residues 21-31 (RGIGSGNGKTA) and 42-52 (SGGGVRPGFEG).

This sequence belongs to the universal ribosomal protein uL15 family. As to quaternary structure, part of the 50S ribosomal subunit.

Binds to the 23S rRNA. The sequence is that of Large ribosomal subunit protein uL15 from Bacillus velezensis (strain DSM 23117 / BGSC 10A6 / LMG 26770 / FZB42) (Bacillus amyloliquefaciens subsp. plantarum).